Here is a 596-residue protein sequence, read N- to C-terminus: Aspartate--tRNA(Asp/Asn) ligase (596 aa).

Glu-169 lines the L-aspartate pocket. The aspartate stretch occupies residues 193 to 196 (QLFK). Arg-215 contacts L-aspartate. Residues 215-217 (RDE) and Gln-224 each bind ATP. Residue His-447 participates in L-aspartate binding. Glu-481 contacts ATP. Arg-488 serves as a coordination point for L-aspartate. 533–536 (GWDR) is a binding site for ATP. A disordered region spans residues 559 to 596 (GYDPLTQAPAPITAQQRKEAGVDFKPEAKKADPGATKA). The segment covering 574-590 (QRKEAGVDFKPEAKKAD) has biased composition (basic and acidic residues).

Belongs to the class-II aminoacyl-tRNA synthetase family. Type 1 subfamily. Homodimer.

The protein resides in the cytoplasm. It carries out the reaction tRNA(Asx) + L-aspartate + ATP = L-aspartyl-tRNA(Asx) + AMP + diphosphate. Functionally, aspartyl-tRNA synthetase with relaxed tRNA specificity since it is able to aspartylate not only its cognate tRNA(Asp) but also tRNA(Asn). Reaction proceeds in two steps: L-aspartate is first activated by ATP to form Asp-AMP and then transferred to the acceptor end of tRNA(Asp/Asn). This is Aspartate--tRNA(Asp/Asn) ligase from Arthrobacter sp. (strain FB24).